We begin with the raw amino-acid sequence, 811 residues long: Probable inorganic carbon transporter subunit DabA (811 aa).

Residues Cys-336, Asp-338, His-498, and Cys-513 each coordinate Zn(2+).

It belongs to the inorganic carbon transporter (TC 9.A.2) DabA family. As to quaternary structure, forms a complex with DabB. Requires Zn(2+) as cofactor.

It is found in the cell inner membrane. In terms of biological role, part of an energy-coupled inorganic carbon pump. The polypeptide is Probable inorganic carbon transporter subunit DabA (Rhodospirillum centenum (strain ATCC 51521 / SW)).